We begin with the raw amino-acid sequence, 393 residues long: Pyrimidine monooxygenase RutA (393 aa).

FMN-binding positions include 79 to 80 (IK), Asn145, Glu154, 170 to 171 (RY), and Ser220.

Belongs to the NtaA/SnaA/DszA monooxygenase family. RutA subfamily.

It catalyses the reaction uracil + FMNH2 + NADH + O2 = (Z)-3-ureidoacrylate + FMN + NAD(+) + H2O + H(+). The catalysed reaction is thymine + FMNH2 + NADH + O2 = (Z)-2-methylureidoacrylate + FMN + NAD(+) + H2O + H(+). Catalyzes the pyrimidine ring opening between N-3 and C-4 by an unusual flavin hydroperoxide-catalyzed mechanism, adding oxygen atoms in the process to yield ureidoacrylate peracid, that immediately reacts with FMN forming ureidoacrylate and FMN-N(5)-oxide. The FMN-N(5)-oxide reacts spontaneously with NADH to produce FMN. Requires the flavin reductase RutF to regenerate FMN in vivo. This is Pyrimidine monooxygenase RutA from Escherichia coli O18:K1:H7 (strain IHE3034 / ExPEC).